The sequence spans 1367 residues: Collagen alpha-1(XV) chain (1367 aa).

Residues 1-31 (MTHRRTAQGRRPRWLLSIISALLSAVLQTRA) form the signal peptide. The 196-residue stretch at 54–249 (SVSFTTGYGG…SSASGEASGF (196 aa)) folds into the Laminin G-like domain. The tract at residues 229–604 (RTPEELCEAQ…DIVGNEDLLR (376 aa)) is nonhelical region 1 (NC1). O-linked (Xyl...) (chondroitin sulfate) serine glycosylation is found at S243 and S247. Positions 267–319 (APPKESHVDPISVPPTSSSPAEDSELSGEPVPEGTPETNLSIIGHSSPEQGSG) are disordered. Residues N305 and N323 are each glycosylated (N-linked (GlcNAc...) asparagine). An O-linked (Xyl...) (chondroitin sulfate) serine glycan is attached at S341. N-linked (GlcNAc...) asparagine glycans are attached at residues N348, N375, and N402. Disordered stretches follow at residues 396–446 (DTPD…SHGE) and 529–784 (TAEP…GHVE). Residues 402–429 (NLTTTASGDGEVPTSTDGDTEADSSPTG) are compositionally biased toward polar residues. The segment covering 434–446 (KPREEATLGSHGE) has biased composition (basic and acidic residues). Positions 555 to 564 (PSGPPLPTPT) are enriched in pro residues. A compositionally biased stretch (gly residues) spans 582–595 (GPVGGLDEGSGSGD). Collagen-like domains lie at 605–665 (GPPG…GMKG) and 666–717 (EKGA…PPGP). Residues 605–718 (GPPGPPGPPG…PGPPGPPGPG (114 aa)) are triple-helical region 1 (COL1). Residues 606-616 (PPGPPGPPGSP) are compositionally biased toward pro residues. Residue N673 is glycosylated (N-linked (GlcNAc...) asparagine). A compositionally biased stretch (pro residues) spans 703–717 (MGPPGPPGPPGPPGP). A nonhelical region 2 (NC2) region spans residues 719-748 (CTTELGFEIEGSGDVRLLSKPTISGPTSPS). S730 carries an O-linked (Xyl...) (chondroitin sulfate) serine glycan. Positions 737 to 750 (SKPTISGPTSPSGP) are enriched in low complexity. Residues 749-783 (GPKGEKGEQGAKGERGADGTSTMGPPGPRGPPGHV) are triple-helical region 2 (COL2). Residues 751 to 765 (KGEKGEQGAKGERGA) show a composition bias toward basic and acidic residues. A nonhelical region 3 (NC3) region spans residues 784–807 (EVLSSSLINITNGSMNFSDIPELM). N-linked (GlcNAc...) asparagine glycosylation is found at N792, N795, and N799. Collagen-like domains are found at residues 808–850 (GPPG…GEPG) and 863–912 (KGRK…GDRG). A triple-helical region 3 (COL3) region spans residues 808 to 852 (GPPGPDGVPGLPGFPGPRGPKGDTGVPGFPGLKGEQGEKGEPGAI). The nonhelical region 4 (NC4) stretch occupies residues 853 to 863 (LTGDVPLEMMK). The segment at 864–934 (GRKGEPGIHG…PGPPGPPGAV (71 aa)) is triple-helical region 4 (COL4). Positions 905-930 (KGAKGDRGVTLPGPPGLPGPPGPPGP) are disordered. Pro residues predominate over residues 916–930 (PGPPGLPGPPGPPGP). The tract at residues 935–968 (VNIKGAVFPIPARPHCKTPVGTAHPGDPELVTFH) is nonhelical region 5 (NC5). A triple-helical region 5 (COL5) region spans residues 969-998 (GVKGEKGSWGLPGSKGEKGDQGAQGPPGPP). Disordered regions lie at residues 974–1000 (KGSW…PPVD) and 1055–1089 (GPPG…PAIL). The nonhelical region 6 (NC6) stretch occupies residues 999–1031 (VDPAYLRHFLNSLKGENEDASFRGESSNNLFVS). Residues 1032–1086 (GPPGLPGYPGLVGQKGEAVVGPQGPPGIPGLPGPPGFGRPGVPGPPGPPGPPGPP) form a triple-helical region 6 (COL6) region. The segment covering 1055 to 1086 (GPPGIPGLPGPPGFGRPGVPGPPGPPGPPGPP) has biased composition (pro residues). The nonhelical region 7 (NC7) stretch occupies residues 1087 to 1096 (AILGAAVALP). Positions 1097 to 1111 (GPPGPPGQPGLPGSR) are triple-helical region 7 (COL7). The tract at residues 1112 to 1367 (NLVTALSDMG…ENSFMTDTRK (256 aa)) is nonhelical region 8 (NC8). Disulfide bonds link C1216–C1356 and C1318–C1348.

The protein belongs to the multiplexin collagen family. In terms of assembly, trimer; disulfide-linked. Interacts moderately with EFEMP2. In terms of processing, prolines at the third position of the tripeptide repeating unit (G-X-Y) are hydroxylated in some or all of the chains. Post-translationally, O-glycosylated; contains chondroitin sulfate. In terms of tissue distribution, detected in testis, brain, heart, kidney, skeletal muscle and skin (at protein level). Detected in heart and skeletal muscle.

Its subcellular location is the secreted. It localises to the extracellular space. The protein localises to the extracellular matrix. Its function is as follows. Structural protein that stabilizes microvessels and muscle cells, both in heart and in skeletal muscle. Restin potently inhibits angiogenesis. The protein is Collagen alpha-1(XV) chain (Col15a1) of Mus musculus (Mouse).